A 160-amino-acid chain; its full sequence is Major pollen allergen Bet v 1-M/N (160 aa).

Brassinolide-binding residues include K55, Y82, Y84, and N101.

The protein belongs to the BetVI family.

The protein localises to the cytoplasm. Functionally, may be a general steroid carrier protein. The sequence is that of Major pollen allergen Bet v 1-M/N (BETV1M) from Betula pendula (European white birch).